A 99-amino-acid chain; its full sequence is Large ribosomal subunit protein uL23 (99 aa).

This sequence belongs to the universal ribosomal protein uL23 family. As to quaternary structure, part of the 50S ribosomal subunit. Contacts protein L29, and trigger factor when it is bound to the ribosome.

Functionally, one of the early assembly proteins it binds 23S rRNA. One of the proteins that surrounds the polypeptide exit tunnel on the outside of the ribosome. Forms the main docking site for trigger factor binding to the ribosome. In Alkalilimnicola ehrlichii (strain ATCC BAA-1101 / DSM 17681 / MLHE-1), this protein is Large ribosomal subunit protein uL23.